The chain runs to 356 residues: Protein RecA (356 aa).

Position 68–75 (68–75 (GQESSGKT)) interacts with ATP.

The protein belongs to the RecA family.

The protein localises to the cytoplasm. Its function is as follows. Can catalyze the hydrolysis of ATP in the presence of single-stranded DNA, the ATP-dependent uptake of single-stranded DNA by duplex DNA, and the ATP-dependent hybridization of homologous single-stranded DNAs. It interacts with LexA causing its activation and leading to its autocatalytic cleavage. The polypeptide is Protein RecA (Thermotoga petrophila (strain ATCC BAA-488 / DSM 13995 / JCM 10881 / RKU-1)).